Reading from the N-terminus, the 757-residue chain is Polyribonucleotide nucleotidyltransferase (757 aa).

Residues Asp-532 and Asp-538 each coordinate Mg(2+). Positions 598 to 657 constitute a KH domain; the sequence is PRVTAIKVPVDKIGEVIGPKGKMINSITEQTGANISIEDDGTVFVGATDGPSAQAAIDMI. The S1 motif domain occupies 669–738; sequence GERFLGTVVK…NRGKISLIPV (70 aa).

It belongs to the polyribonucleotide nucleotidyltransferase family. Requires Mg(2+) as cofactor.

It is found in the cytoplasm. The enzyme catalyses RNA(n+1) + phosphate = RNA(n) + a ribonucleoside 5'-diphosphate. Its function is as follows. Involved in mRNA degradation. Catalyzes the phosphorolysis of single-stranded polyribonucleotides processively in the 3'- to 5'-direction. This is Polyribonucleotide nucleotidyltransferase from Rhodococcus jostii (strain RHA1).